The sequence spans 399 residues: Protein translocase subunit SecD (399 aa).

6 consecutive transmembrane segments (helical) span residues Ile-7 to Pro-27, Val-239 to Val-259, Ile-262 to Leu-282, Gly-286 to Ala-306, Ala-329 to Gly-351, and Gly-357 to Leu-381.

It belongs to the SecD/SecF family. SecD subfamily. Forms a complex with SecF. Part of the essential Sec protein translocation apparatus which comprises SecA, SecYEG and auxiliary proteins SecDF. Other proteins may also be involved.

Its subcellular location is the cell inner membrane. Functionally, part of the Sec protein translocase complex. Interacts with the SecYEG preprotein conducting channel. SecDF uses the proton motive force (PMF) to complete protein translocation after the ATP-dependent function of SecA. The polypeptide is Protein translocase subunit SecD (Dictyoglomus turgidum (strain DSM 6724 / Z-1310)).